Here is a 314-residue protein sequence, read N- to C-terminus: MRGKRIFIGSSSEELRLAEQAKKILEKNTNYQVTIWNENMWDKAVFRLNNSYLNDLIRATLHFDFGILIGTKDDKVIFRGSEEIQPRDNVLFELGLFIGRLGLNNCAFLVDEEIKILSDVKGISLARFKEKDSDSFNNAVLSIRESFDRQNDSDINFFPSSTLAAVYYENFIKPTCSHIINNGGLLDKNGYIYKKCTIKIIIPKKLTSDVNSQFQRIKAKIETKELSFEYLGRPRNINVEIIAEDGEVMIIDFPTILSGINYAISNLLPQDFNSMSVDYEAILSRELERFVYTLKKIALRDGFDDLIKIVDEDN.

Residues 5–129 (RIFIGSSSEE…VKGISLARFK (125 aa)) form the TIR domain. An STING domain region spans residues 160–314 (SSTLAAVYYE…DLIKIVDEDN (155 aa)). 3',3'-c-di-GMP is bound by residues phenylalanine 171, proline 234, and aspartate 252.

It in the C-terminal section; belongs to the bacterial STING family. As to quaternary structure, homodimer. Forms homodimers; in the presence of c-di-GMP forms filaments with an ordered array of parallel-stacked subunits.

The enzyme catalyses NAD(+) + H2O = ADP-D-ribose + nicotinamide + H(+). With respect to regulation, NAD(+) hydrolase activity is strongly stimulated by c-di-GMP, weakly by 3'3'-cGAMP, very weakly by c-di-AMP but not at all by 2'3'-cGAMP. Self-association of TIR domains is required for NADase activity. Effector protein of a CBASS antiviral system with NAD(+) hydrolase activity. CBASS (cyclic oligonucleotide-based antiphage signaling system) provides immunity against bacteriophage. The CD-NTase protein synthesizes cyclic nucleotides in response to infection; these serve as specific second messenger signals. The signals activate a diverse range of effectors, leading to bacterial cell death and thus abortive phage infection. A type I-(GG) CBASS system. Functionally, binds c-di-GMP (synthesized by the cognate CdnE encoded upstream in the same operon), and about 10-fold less well 3'3'-cGAMP, but not c-di-AMP, 2'-3'-cGAMP or cUMP-AMP (tested without the N-terminal TIR domain). Upon activation by c-di-GMP forms filaments which hydrolyze NAD(+); filament formation is required for enzyme activation. This Capnocytophaga granulosa (strain ATCC 51502 / DSM 11449 / JCM 8566 / LMG 16022 / NCTC 12948 / B0611) protein is CD-NTase-associated protein 12.